The sequence spans 365 residues: Flagellar P-ring protein (365 aa).

The signal sequence occupies residues Met-1–Ala-22.

Belongs to the FlgI family. The basal body constitutes a major portion of the flagellar organelle and consists of four rings (L,P,S, and M) mounted on a central rod.

The protein localises to the periplasm. It is found in the bacterial flagellum basal body. In terms of biological role, assembles around the rod to form the L-ring and probably protects the motor/basal body from shearing forces during rotation. In Marinobacter nauticus (strain ATCC 700491 / DSM 11845 / VT8) (Marinobacter aquaeolei), this protein is Flagellar P-ring protein.